The following is an 878-amino-acid chain: Alanine--tRNA ligase (878 aa).

Zn(2+) contacts are provided by H568, H572, C670, and H674.

Belongs to the class-II aminoacyl-tRNA synthetase family. Requires Zn(2+) as cofactor.

It is found in the cytoplasm. The enzyme catalyses tRNA(Ala) + L-alanine + ATP = L-alanyl-tRNA(Ala) + AMP + diphosphate. In terms of biological role, catalyzes the attachment of alanine to tRNA(Ala) in a two-step reaction: alanine is first activated by ATP to form Ala-AMP and then transferred to the acceptor end of tRNA(Ala). Also edits incorrectly charged Ser-tRNA(Ala) and Gly-tRNA(Ala) via its editing domain. The protein is Alanine--tRNA ligase of Latilactobacillus sakei subsp. sakei (strain 23K) (Lactobacillus sakei subsp. sakei).